We begin with the raw amino-acid sequence, 303 residues long: MYYGFDIGGTKIALGVFDNERRLRWEKRVPTPREGYEAFLTAVCDLVAEADQRFDVKGSVGIGIPGMPETEDGTLYAANVPAASGKPLRADLSARLDRDVRLDNDANCFALSEAWDDEFTQYPLVMGLILGTGVGGGLVLNGKPITGCSYITGEFGHMRLPVDALTLMGFDFPLRRCGCGQLGCIENYLSGRGFAWLYQHYYHQPLQAPEIIALWEQGDERARAHVERYLDLLAVCLGNILTIVDPDLVVIGGGLSNFTAITTQLADRLPRHLLPVARVPRIERARHGDAGGMRGAAFLHLTD.

Residues 4 to 11 (GFDIGGTK) and 133 to 140 (GVGGGLVL) each bind ATP. The Zn(2+) site is built by H157, C177, C179, and C184.

Belongs to the ROK (NagC/XylR) family. NagK subfamily.

The catalysed reaction is N-acetyl-D-glucosamine + ATP = N-acetyl-D-glucosamine 6-phosphate + ADP + H(+). The protein operates within cell wall biogenesis; peptidoglycan recycling. Its function is as follows. Catalyzes the phosphorylation of N-acetyl-D-glucosamine (GlcNAc) derived from cell-wall degradation, yielding GlcNAc-6-P. The chain is N-acetyl-D-glucosamine kinase from Citrobacter koseri (strain ATCC BAA-895 / CDC 4225-83 / SGSC4696).